A 503-amino-acid chain; its full sequence is Cobyric acid synthase (503 aa).

One can recognise a GATase cobBQ-type domain in the interval 255–444 (DIDIAVIRYP…FHDLFHNDAF (190 aa)). Cys337 (nucleophile) is an active-site residue. His436 is an active-site residue.

It belongs to the CobB/CobQ family. CobQ subfamily.

It participates in cofactor biosynthesis; adenosylcobalamin biosynthesis. Catalyzes amidations at positions B, D, E, and G on adenosylcobyrinic A,C-diamide. NH(2) groups are provided by glutamine, and one molecule of ATP is hydrogenolyzed for each amidation. This Geobacillus sp. (strain WCH70) protein is Cobyric acid synthase.